A 348-amino-acid chain; its full sequence is Putative S-adenosyl-L-methionine-dependent methyltransferase MRA_3439 (348 aa).

S-adenosyl-L-methionine-binding positions include Asp171 and 200–201 (DL).

It belongs to the UPF0677 family.

In terms of biological role, exhibits S-adenosyl-L-methionine-dependent methyltransferase activity. In Mycobacterium tuberculosis (strain ATCC 25177 / H37Ra), this protein is Putative S-adenosyl-L-methionine-dependent methyltransferase MRA_3439.